A 436-amino-acid chain; its full sequence is GTPase Der (436 aa).

EngA-type G domains lie at 4–167 (PTVA…PVEE) and 175–351 (IRFS…ESQN). GTP-binding positions include 10 to 17 (GRPNVGKS), 57 to 61 (DTGGI), 119 to 122 (NKVD), 181 to 188 (GRPNVGKS), 229 to 233 (DTAGM), and 294 to 297 (NKWD). In terms of domain architecture, KH-like spans 352–436 (KRIPSAVLND…PIHLIARKRK (85 aa)).

The protein belongs to the TRAFAC class TrmE-Era-EngA-EngB-Septin-like GTPase superfamily. EngA (Der) GTPase family. As to quaternary structure, associates with the 50S ribosomal subunit.

In terms of biological role, GTPase that plays an essential role in the late steps of ribosome biogenesis. In Streptococcus pyogenes serotype M5 (strain Manfredo), this protein is GTPase Der.